The chain runs to 744 residues: MDSLYVEEVAASLVREFLSRKGLNKTFVTMDQERPRCELSINSRNDLRKVLHLEFLYKENKAKEKPLRTNLELITRYFLDNVGNTDNSESQEVPIPAIPVPKKNNKLPLRHSETTLVNIYDLSDEDTGRRTSWSEAGKARHDSLDGDILGNFVSSKKPSHKSKAAHVDLGDSLPLVPAWEKVDQLHSSEPGIDVKKTMERTRPKSGLIVRGMMAGPVASSPQDSFRKRSLRRSSALSRKLQTPEEIQQQSEPFVHTPAYLGPQEVPDSSSDSVSRSPLGQLNELSIEKPNVTSSSQGLSQRDRPRLRSVSEDSPLGYSHTEGNSRMAQDQLERAFKRQGVQPPSLRKNQLVSDRTDDKPDALQLEDVEDELIKEDIVLFPPPSMLKLQTVSKPIDLSLAKEIKTLLFGSTFCCFSEEWKLQNFSFNDIASLKYGIVQNKGGPCGVLAAVQGCVLQKLLFEGDNRTNSNLRLQPSDAQRTRCLALAIADILWRAGGKEQAVVALASGTPHFSPTGKYKADGVLETLTLYSLTSSEDLVTFIQQSVHQFEAGPYGCILLTLSAILSRSLELVRQDFDVPTSHLIGAHGYCTQELVNLLLTGRAVSNVFNDVVELDSGDGNITLLRGIEARSDIGFLSLFEHYNVCQVGCFLKTPRFPIWVVCSESHFSILFSLQPELLCDWRSERLFDLYYYDGLANQQEEIRLTVDTTKTAPADSCSDLVPPLELCIRTKWKGASVNWNGSDPIL.

Serine 143, serine 220, and serine 224 each carry phosphoserine. Residues glycine 211–lysine 358 are disordered. A compositionally biased stretch (low complexity) spans valine 265–proline 277. The span at asparagine 290–serine 299 shows a compositional bias: polar residues. The residue at position 295 (serine 295) is a Phosphoserine. The segment covering glutamine 300–serine 310 has biased composition (basic and acidic residues). The active-site Nucleophile is cysteine 443. The active-site Proton acceptor is the histidine 664.

The protein belongs to the MINDY deubiquitinase family. FAM188 subfamily.

It carries out the reaction Thiol-dependent hydrolysis of ester, thioester, amide, peptide and isopeptide bonds formed by the C-terminal Gly of ubiquitin (a 76-residue protein attached to proteins as an intracellular targeting signal).. In terms of biological role, probable hydrolase that can remove 'Lys-48'-linked conjugated ubiquitin from proteins. The sequence is that of Probable ubiquitin carboxyl-terminal hydrolase MINDY-4 (Mindy4) from Mus musculus (Mouse).